A 154-amino-acid polypeptide reads, in one-letter code: Large ribosomal subunit protein uL11 (154 aa).

It belongs to the universal ribosomal protein uL11 family. As to quaternary structure, part of the ribosomal stalk of the 50S ribosomal subunit. Interacts with L10 and the large rRNA to form the base of the stalk. L10 forms an elongated spine to which L12 dimers bind in a sequential fashion forming a multimeric L10(L12)X complex. Post-translationally, one or more lysine residues are methylated.

Its function is as follows. Forms part of the ribosomal stalk which helps the ribosome interact with GTP-bound translation factors. In Leuconostoc mesenteroides subsp. mesenteroides (strain ATCC 8293 / DSM 20343 / BCRC 11652 / CCM 1803 / JCM 6124 / NCDO 523 / NBRC 100496 / NCIMB 8023 / NCTC 12954 / NRRL B-1118 / 37Y), this protein is Large ribosomal subunit protein uL11.